Consider the following 441-residue polypeptide: Ribosomal protein uS12 methylthiotransferase RimO (441 aa).

The 111-residue stretch at 7–117 folds into the MTTase N-terminal domain; sequence PKVSFVSLGC…VLDAVHRALP (111 aa). Positions 16, 52, 81, 148, 152, and 155 each coordinate [4Fe-4S] cluster. A Radical SAM core domain is found at 134–371; sequence LTPRHYAYLK…MARQQKISAR (238 aa). The TRAM domain maps to 374–440; that stretch reads KRKVGTRQQV…AYDLHGSVAG (67 aa).

Belongs to the methylthiotransferase family. RimO subfamily. [4Fe-4S] cluster serves as cofactor.

The protein resides in the cytoplasm. It carries out the reaction L-aspartate(89)-[ribosomal protein uS12]-hydrogen + (sulfur carrier)-SH + AH2 + 2 S-adenosyl-L-methionine = 3-methylsulfanyl-L-aspartate(89)-[ribosomal protein uS12]-hydrogen + (sulfur carrier)-H + 5'-deoxyadenosine + L-methionine + A + S-adenosyl-L-homocysteine + 2 H(+). Functionally, catalyzes the methylthiolation of an aspartic acid residue of ribosomal protein uS12. The sequence is that of Ribosomal protein uS12 methylthiotransferase RimO from Rhodopseudomonas palustris (strain BisB18).